The sequence spans 555 residues: Vacuolar fusion protein MON1 homolog A (555 aa).

The segment covering 1 to 12 (MAADMQRKRSSE) has biased composition (basic and acidic residues). The disordered stretch occupies residues 1–90 (MAADMQRKRS…PPLATDMRQI (90 aa)). Residues Ser-31 and Ser-56 each carry the phosphoserine modification. Phosphothreonine is present on Thr-61. The residue at position 91 (Ser-91) is a Phosphoserine. A disordered region spans residues 112–149 (MLPGSSEDWPESPGAARRPATEPPRDGAGEGDEEEAAE). Positions 130 to 139 (PATEPPRDGA) are enriched in basic and acidic residues.

It belongs to the MON1/SAND family. As to quaternary structure, interacts with CCZ1. Found in a complex with RMC1, CCZ1, MON1A and MON1B. The MON1A-CCZ1B complex interacts with RIMOC1. The MON1A-CCZ1B complex interacts with RAB7A and this interaction is enhanced in the presence of RIMOC1.

Plays an important role in membrane trafficking through the secretory apparatus. Not involved in endocytic trafficking to lysosomes. Acts in concert with CCZ1, as a guanine exchange factor (GEF) for RAB7, promotes the exchange of GDP to GTP, converting it from an inactive GDP-bound form into an active GTP-bound form. The protein is Vacuolar fusion protein MON1 homolog A (MON1A) of Bos taurus (Bovine).